A 552-amino-acid chain; its full sequence is Rqc2 homolog RqcH (552 aa).

Coiled-coil stretches lie at residues 271 to 317 (RDRV…QKGE) and 357 to 398 (NAQR…MLGQ).

It belongs to the NEMF family. Associates with stalled 50S ribosomal subunits, binds to RqcH. Recombinant protein interacts with the N-terminal 30 kDa of human fibronectin (FN1).

Key component of the ribosome quality control system (RQC), a ribosome-associated complex that mediates the extraction of incompletely synthesized nascent chains from stalled ribosomes and their subsequent degradation. RqcH recruits Ala-charged tRNA, and with RqcP directs the elongation of stalled nascent chains on 50S ribosomal subunits, leading to non-templated C-terminal alanine extensions (Ala tail). The Ala tail promotes nascent chain degradation. May add between 1 and at least 8 Ala residues. Binds to stalled 50S ribosomal subunits. The sequence is that of Rqc2 homolog RqcH from Streptococcus suis (strain 05ZYH33).